We begin with the raw amino-acid sequence, 479 residues long: MKKPEKITSRTADFAKWYVDVITQADLMNYGPIKGTIYFKPLGYKIWENIVKIVNAYFVKQKIENVYFPLLIPQDFIEKEKKHIEGFAPELLTITKVGDKNLVENIYIRPTSELLFADYFKAEIAKNNILPIKLNQWSQVLRWEKTTNPFLRNTEFLWQEGHTIHASKVEANQFAKKIARFYKYFLENYLAIPVISGQKTEREKFAGAVNTYTVEAMMQNFRALQSATAHFLGQNFAKNFEIFYKNKENKSQIPFQTSWGLSTRLIGAIVMVHSDDNGLIFPPKIAPIQVDILEFFSKKNQEVKIFAKRIAKILKNAKIAYKIDDTDQQIGYKINNSEVHGAPIRIEIGPNEVKNNQICLVRRDNHQKFFFNIDLLKEKCRKILEQIQADLFKKAKIRLLENTVFVNSINEFEQAIKNNKFVIAPFSESPEREQEIQEKTGATARCILPKNSFFALPQAGNSIFSGEKTNKFVLFAKSY.

It belongs to the class-II aminoacyl-tRNA synthetase family. ProS type 3 subfamily. Homodimer.

It is found in the cytoplasm. The enzyme catalyses tRNA(Pro) + L-proline + ATP = L-prolyl-tRNA(Pro) + AMP + diphosphate. Its function is as follows. Catalyzes the attachment of proline to tRNA(Pro) in a two-step reaction: proline is first activated by ATP to form Pro-AMP and then transferred to the acceptor end of tRNA(Pro). The chain is Proline--tRNA ligase from Mesomycoplasma hyopneumoniae (strain 7448) (Mycoplasma hyopneumoniae).